A 218-amino-acid chain; its full sequence is Small ribosomal subunit protein mS34 (218 aa).

This sequence belongs to the mitochondrion-specific ribosomal protein mS34 family. Component of the mitochondrial ribosome small subunit (28S) which comprises a 12S rRNA and about 30 distinct proteins. In terms of tissue distribution, widely expressed (at protein liver).

Its subcellular location is the mitochondrion. Required for mitochondrial translation, plays a role in maintaining the stability of the small ribosomal subunit and the 12S rRNA that are required for mitoribosome formation. In Mus musculus (Mouse), this protein is Small ribosomal subunit protein mS34 (Mrps34).